We begin with the raw amino-acid sequence, 570 residues long: Sulfite reductase [NADPH] hemoprotein beta-component (570 aa).

[4Fe-4S] cluster-binding residues include C434, C440, C479, and C483. Position 483 (C483) interacts with siroheme.

This sequence belongs to the nitrite and sulfite reductase 4Fe-4S domain family. In terms of assembly, alpha(8)-beta(8). The alpha component is a flavoprotein, the beta component is a hemoprotein. The cofactor is siroheme. [4Fe-4S] cluster serves as cofactor.

The catalysed reaction is hydrogen sulfide + 3 NADP(+) + 3 H2O = sulfite + 3 NADPH + 4 H(+). It participates in sulfur metabolism; hydrogen sulfide biosynthesis; hydrogen sulfide from sulfite (NADPH route): step 1/1. Its function is as follows. Component of the sulfite reductase complex that catalyzes the 6-electron reduction of sulfite to sulfide. This is one of several activities required for the biosynthesis of L-cysteine from sulfate. The sequence is that of Sulfite reductase [NADPH] hemoprotein beta-component from Salmonella gallinarum (strain 287/91 / NCTC 13346).